The primary structure comprises 167 residues: uncharacterized protein (167 aa).

Positions 1 to 13 (MQGDIRRKKDLLP) are enriched in basic and acidic residues. Disordered stretches follow at residues 1–26 (MQGDIRRKKDLLPRYKTGSKYNSRRR) and 67–167 (ESHS…ILDN). Over residues 71–80 (SDVSASASDH) the composition is skewed to low complexity. Positions 102-156 (VPKEKFNNEVAKQQEVKNLENDLKPQIDSEKQKQINKDKKEQKQQLQKEKQDLAK) are enriched in basic and acidic residues.

This is an uncharacterized protein from Saccharomyces cerevisiae (strain ATCC 204508 / S288c) (Baker's yeast).